The chain runs to 148 residues: UPF0208 membrane protein HD_1715 (148 aa).

A run of 2 helical transmembrane segments spans residues 41-60 and 66-88; these read AARFMPIFACFAILWQYFFT and ILANAIITSLFAISLPYQGLYWL.

This sequence belongs to the UPF0208 family.

The protein localises to the cell inner membrane. The protein is UPF0208 membrane protein HD_1715 of Haemophilus ducreyi (strain 35000HP / ATCC 700724).